The sequence spans 915 residues: Probable serine/threonine-protein kinase dyrk2 (915 aa).

Composition is skewed to low complexity over residues 51–79, 108–119, 170–185, and 196–218; these read TSNT…PTIS, SSSKSSSNSSSI, SSSS…STTS, and SSNS…SGSS. Disordered regions lie at residues 51-119, 132-334, and 349-533; these read TSNT…SSSI, FSSS…SKSS, and AIKS…PTKS. The span at 234–260 shows a compositional bias: polar residues; that stretch reads PSHTISDSPRSSTMKSRSVSISNGSLF. 6 stretches are compositionally biased toward low complexity: residues 261-287, 300-333, 352-364, 379-391, 399-425, and 433-533; these read SPTN…SSIS, SSST…PSKS, SRSL…LARV, SSSS…SFSS, SSSK…ASKI, and SLSS…PTKS. In terms of domain architecture, Protein kinase spans 605–902; it reads FEIVSILGQG…AEQGLKHDWI (298 aa). Residues 611–619 and lysine 634 contribute to the ATP site; that span reads LGQGSFCQV. Residue aspartate 731 is the Proton acceptor of the active site.

This sequence belongs to the protein kinase superfamily. CMGC Ser/Thr protein kinase family. MNB/DYRK subfamily.

The enzyme catalyses L-seryl-[protein] + ATP = O-phospho-L-seryl-[protein] + ADP + H(+). The catalysed reaction is L-threonyl-[protein] + ATP = O-phospho-L-threonyl-[protein] + ADP + H(+). It carries out the reaction L-tyrosyl-[protein] + ATP = O-phospho-L-tyrosyl-[protein] + ADP + H(+). This chain is Probable serine/threonine-protein kinase dyrk2 (dyrk2), found in Dictyostelium discoideum (Social amoeba).